Consider the following 230-residue polypeptide: uncharacterized protein (230 aa).

Positions 1–22 are cleaved as a signal peptide; it reads MNIRSFLLISIFTAISYLVVDG. The Lumenal segment spans residues 23-167; that stretch reads ATPRTFAPSA…YTPYGGVKAL (145 aa). Positions 55 to 90 are disordered; it reads SSSSSSSSISTSHDSQPSTSSSSPSSTSTSSSSGTS. The helical transmembrane segment at 168–188 threads the bilayer; sequence IGILVGVVVGSVFLLAIVMVI. At 189–230 the chain is on the cytoplasmic side; the sequence is ARIWGPRLLANKDQNNNNEDLDSNLVSKDSEGTPQITYASNF. The segment at 208–230 is disordered; that stretch reads DLDSNLVSKDSEGTPQITYASNF.

It is found in the endoplasmic reticulum membrane. This is an uncharacterized protein from Schizosaccharomyces pombe (strain 972 / ATCC 24843) (Fission yeast).